Here is a 470-residue protein sequence, read N- to C-terminus: Ribulose bisphosphate carboxylase large chain (470 aa).

K5 carries the N6,N6,N6-trimethyllysine modification. Substrate is bound by residues N114 and T164. K166 acts as the Proton acceptor in catalysis. K168 contributes to the substrate binding site. K192, D194, and E195 together coordinate Mg(2+). K192 bears the N6-carboxylysine mark. H285 serves as the catalytic Proton acceptor. The substrate site is built by R286, H318, and S370.

This sequence belongs to the RuBisCO large chain family. Type I subfamily. As to quaternary structure, heterohexadecamer of 8 large chains and 8 small chains; disulfide-linked. The disulfide link is formed within the large subunit homodimers. Mg(2+) serves as cofactor. The disulfide bond which can form in the large chain dimeric partners within the hexadecamer appears to be associated with oxidative stress and protein turnover.

It localises to the plastid. The protein resides in the chloroplast. It catalyses the reaction 2 (2R)-3-phosphoglycerate + 2 H(+) = D-ribulose 1,5-bisphosphate + CO2 + H2O. The enzyme catalyses D-ribulose 1,5-bisphosphate + O2 = 2-phosphoglycolate + (2R)-3-phosphoglycerate + 2 H(+). In terms of biological role, ruBisCO catalyzes two reactions: the carboxylation of D-ribulose 1,5-bisphosphate, the primary event in carbon dioxide fixation, as well as the oxidative fragmentation of the pentose substrate in the photorespiration process. Both reactions occur simultaneously and in competition at the same active site. The polypeptide is Ribulose bisphosphate carboxylase large chain (Bertiera breviflora).